The primary structure comprises 216 residues: Redox-sensing transcriptional repressor Rex (216 aa).

Residues 20 to 59 (QYYRLFKSLVEENVTRTNSQLISEKIGVDAATIRRDFSLF) constitute a DNA-binding region (H-T-H motif). 94 to 99 (GVGNLG) is an NAD(+) binding site.

This sequence belongs to the transcriptional regulatory Rex family. As to quaternary structure, homodimer.

It is found in the cytoplasm. In terms of biological role, modulates transcription in response to changes in cellular NADH/NAD(+) redox state. The sequence is that of Redox-sensing transcriptional repressor Rex from Lactococcus lactis subsp. cremoris (Streptococcus cremoris).